We begin with the raw amino-acid sequence, 175 residues long: Lipoprotein signal peptidase (175 aa).

Helical transmembrane passes span 25-45 (LWMA…IVIV), 56-76 (VTGF…SFLA), 81-101 (WQRW…VWLL), and 110-130 (FCFA…DRVV). Residues aspartate 136 and aspartate 154 contribute to the active site. Residues 146–166 (HWPAFNVADCAITVGAVLLIV) traverse the membrane as a helical segment.

Belongs to the peptidase A8 family.

It is found in the cell inner membrane. It catalyses the reaction Release of signal peptides from bacterial membrane prolipoproteins. Hydrolyzes -Xaa-Yaa-Zaa-|-(S,diacylglyceryl)Cys-, in which Xaa is hydrophobic (preferably Leu), and Yaa (Ala or Ser) and Zaa (Gly or Ala) have small, neutral side chains.. It participates in protein modification; lipoprotein biosynthesis (signal peptide cleavage). Its function is as follows. This protein specifically catalyzes the removal of signal peptides from prolipoproteins. This is Lipoprotein signal peptidase from Cupriavidus necator (strain ATCC 17699 / DSM 428 / KCTC 22496 / NCIMB 10442 / H16 / Stanier 337) (Ralstonia eutropha).